A 641-amino-acid chain; its full sequence is WW domain-binding protein 11 (641 aa).

Positions 1–11 (MGRRSTSSTKS) are enriched in polar residues. The segment at 1–37 (MGRRSTSSTKSGKFMNPTDQARKEARKRELKKNKKQR) is disordered. The segment at 1 to 45 (MGRRSTSSTKSGKFMNPTDQARKEARKRELKKNKKQRMMVRAAVL) is required for nuclear import. N6-acetyllysine is present on Lys13. A compositionally biased stretch (basic residues) spans 28–37 (RELKKNKKQR). Residues 75 to 133 (EKVLKDKRKKLRETFERILRLYEKENPDIYKELRKLEVEYEQKRAQLSQYFDAVKNAQH) are a coiled coil. Position 181 is a phosphoserine (Ser181). Residues 186–213 (LGHGVPRLPPGRKPPGPPPGPPPPQVVQ) are disordered. Arg192 bears the Omega-N-methylarginine mark. Pro residues predominate over residues 192–210 (RLPPGRKPPGPPPGPPPPQ). The tract at residues 217 to 221 (RKVGF) is interaction with PP1. The residue at position 236 (Tyr236) is a Phosphotyrosine. The segment at 236–552 (YSPELAQRGH…RPKADDTSAA (317 aa)) is disordered. Ser237 is subject to Phosphoserine. Acidic residues predominate over residues 253–263 (SEDDGYPEDMD). Residues 276–304 (TDKSDGESDGDEFVHRDNGERDNNEEKKS) show a composition bias toward basic and acidic residues. Phosphoserine occurs at positions 279 and 283. Residues 306 to 310 (LSVRF) are interaction with PP1. The segment covering 351-365 (EFSEDDDEDDSDDSE) has biased composition (acidic residues). Residues Ser353, Ser361, and Ser364 each carry the phosphoserine modification. The span at 366–380 (AEKQSQKQHKEESHS) shows a compositional bias: basic and acidic residues. Residues 386–404 (ASSQQQAPPQSVPPSQIQA) are compositionally biased toward low complexity. Composition is skewed to pro residues over residues 405–447 (PPMP…PPGM), 456–504 (RLLP…PPRP), and 510–530 (PLVP…PLPN). The short motif at 455 to 466 (PRLLPPGPPPGR) is the PGR element. Lys557 is covalently cross-linked (Glycyl lysine isopeptide (Lys-Gly) (interchain with G-Cter in SUMO2)). At Lys565 the chain carries N6-acetyllysine. A Glycyl lysine isopeptide (Lys-Gly) (interchain with G-Cter in SUMO2) cross-link involves residue Lys572. The tract at residues 587-623 (RENKGATAAPQRKSEDDSAVPLAKAAPKSGPSVPVSV) is disordered. Ser600 carries the phosphoserine modification.

In terms of assembly, interacts with PPP1CA, PPP1CB and PPP1CC. Interacts via the PGR motif with PQBP1 in the nucleus. Interacts with the WW domains of WBP4. As to expression, ubiquitous. Highly expressed in the heart, pancreas, kidney skeletal muscle, placenta and brain (at protein level). Weakly expressed in liver and lung.

Its subcellular location is the nucleus. The protein localises to the cytoplasm. Its function is as follows. Activates pre-mRNA splicing. May inhibit PP1 phosphatase activity. The sequence is that of WW domain-binding protein 11 from Homo sapiens (Human).